Reading from the N-terminus, the 725-residue chain is DNA replication licensing factor MCM7 (725 aa).

Residues 333–538 (IYNKLARSLA…METDLEMARH (206 aa)) enclose the MCM domain. 383 to 390 (GDPGVAKS) contributes to the ATP binding site. The Arginine finger motif lies at 515–518 (SRFD).

This sequence belongs to the MCM family. As to quaternary structure, component of the minichromosome maintenance (MCM) complex, a heterotetramer composed of MCM2, MCM3, MCM4, MCM5, MCM6 and MCM7.

The protein localises to the nucleus. The catalysed reaction is ATP + H2O = ADP + phosphate + H(+). Probable component of the MCM2-7 complex (MCM complex) that may function as a DNA helicase and which is essential to undergo a single round of replication initiation and elongation per cell cycle in eukaryotic cells. This chain is DNA replication licensing factor MCM7 (MCM7), found in Oryza sativa subsp. indica (Rice).